Here is a 362-residue protein sequence, read N- to C-terminus: 3-isopropylmalate dehydrogenase (362 aa).

The substrate site is built by R97, R107, R135, and D225. Residues D225, D249, and D253 each contribute to the Mg(2+) site. Residue G283–N295 participates in NAD(+) binding.

It belongs to the isocitrate and isopropylmalate dehydrogenases family. LeuB type 1 subfamily. As to quaternary structure, homodimer. Requires Mg(2+) as cofactor. Mn(2+) serves as cofactor.

The protein localises to the cytoplasm. It carries out the reaction (2R,3S)-3-isopropylmalate + NAD(+) = 4-methyl-2-oxopentanoate + CO2 + NADH. Its pathway is amino-acid biosynthesis; L-leucine biosynthesis; L-leucine from 3-methyl-2-oxobutanoate: step 3/4. In terms of biological role, catalyzes the oxidation of 3-carboxy-2-hydroxy-4-methylpentanoate (3-isopropylmalate) to 3-carboxy-4-methyl-2-oxopentanoate. The product decarboxylates to 4-methyl-2 oxopentanoate. The polypeptide is 3-isopropylmalate dehydrogenase (Prochlorococcus marinus (strain SARG / CCMP1375 / SS120)).